A 352-amino-acid polypeptide reads, in one-letter code: Type II restriction enzyme HaeII (352 aa).

It catalyses the reaction Endonucleolytic cleavage of DNA to give specific double-stranded fragments with terminal 5'-phosphates.. In terms of biological role, a P subtype restriction enzyme that recognizes the double-stranded sequence 5'-RGCGCY-3' and cleaves after C-5. The polypeptide is Type II restriction enzyme HaeII (haeIIR) (Haemophilus aegyptius).